Consider the following 276-residue polypeptide: Large ribosomal subunit protein uL2 (276 aa).

The segment at 225 to 276 is disordered; sequence MNPNDHPHGGGEGRNPIGRNPVTPWGKPALGAKTRKKKHPSNRFIVKRRGKK. Residues 257 to 276 show a composition bias toward basic residues; sequence KTRKKKHPSNRFIVKRRGKK.

Belongs to the universal ribosomal protein uL2 family. In terms of assembly, part of the 50S ribosomal subunit. Forms a bridge to the 30S subunit in the 70S ribosome.

In terms of biological role, one of the primary rRNA binding proteins. Required for association of the 30S and 50S subunits to form the 70S ribosome, for tRNA binding and peptide bond formation. It has been suggested to have peptidyltransferase activity; this is somewhat controversial. Makes several contacts with the 16S rRNA in the 70S ribosome. The protein is Large ribosomal subunit protein uL2 of Desulfitobacterium hafniense (strain Y51).